Consider the following 411-residue polypeptide: Probable UDP-arabinose 4-epimerase 3 (411 aa).

Residues 1-13 (MLSFSRARSQGRN) are compositionally biased toward polar residues. The tract at residues 1-22 (MLSFSRARSQGRNTRPLGGGME) is disordered. Topologically, residues 1-31 (MLSFSRARSQGRNTRPLGGGMEYLEPKRKSN) are cytoplasmic. The chain crosses the membrane as a helical; Signal-anchor for type II membrane protein span at residues 32-50 (VMGKIILVVSLTALCIFML). The Lumenal portion of the chain corresponds to 51–411 (KHAPSFTSPT…KTHPHGYASS (361 aa)). 71-102 (HVLVTGGAGYIGSHAALRLLKDSYRVTIVDNL) serves as a coordination point for NAD(+). Tyrosine 219 acts as the Proton acceptor in catalysis.

Belongs to the NAD(P)-dependent epimerase/dehydratase family. NAD(+) is required as a cofactor.

Its subcellular location is the golgi apparatus. It is found in the golgi stack membrane. The catalysed reaction is UDP-beta-L-arabinopyranose = UDP-alpha-D-xylose. Its pathway is nucleotide-sugar biosynthesis; UDP-L-arabinose biosynthesis; UDP-L-arabinose from UDP-alpha-D-xylose: step 1/1. The protein operates within cell wall biogenesis; cell wall polysaccharide biosynthesis. This chain is Probable UDP-arabinose 4-epimerase 3, found in Arabidopsis thaliana (Mouse-ear cress).